The following is a 301-amino-acid chain: Probable alpha-L-glutamate ligase (301 aa).

The region spanning 104-287 is the ATP-grasp domain; the sequence is LQLLARKGVG…VAGMIINWTE (184 aa). ATP contacts are provided by residues lysine 141, 178-179, aspartate 187, and 211-213; these read EF and RSN. Residues aspartate 248, glutamate 260, and asparagine 262 each coordinate Mg(2+). Residues aspartate 248, glutamate 260, and asparagine 262 each contribute to the Mn(2+) site.

The protein belongs to the RimK family. Mg(2+) is required as a cofactor. Mn(2+) serves as cofactor.

This chain is Probable alpha-L-glutamate ligase, found in Marinobacter nauticus (strain ATCC 700491 / DSM 11845 / VT8) (Marinobacter aquaeolei).